The sequence spans 212 residues: phospholipase A2 inhibitor and Ly6/PLAUR domain-containing protein (212 aa).

The first 24 residues, 1–24 (MILFRRHRTFLLAFTLLCTLLGLG), serve as a signal peptide directing secretion. The region spanning 27 to 117 (LTCEVCKGSG…NSGSVPPPLN (91 aa)) is the UPAR/Ly6 domain. Intrachain disulfides connect C29-C53, C32-C39, C46-C74, C80-C101, C102-C107, C126-C152, and C145-C173.

It belongs to the CNF-like-inhibitor family.

Its subcellular location is the secreted. This Mus musculus (Mouse) protein is phospholipase A2 inhibitor and Ly6/PLAUR domain-containing protein (Pinlyp).